Consider the following 142-residue polypeptide: Small ribosomal subunit protein uS12 (142 aa).

It belongs to the universal ribosomal protein uS12 family. As to quaternary structure, part of the 30S ribosomal subunit.

Its function is as follows. With S4 and S5 plays an important role in translational accuracy. Located at the interface of the 30S and 50S subunits. The chain is Small ribosomal subunit protein uS12 from Thermoplasma acidophilum (strain ATCC 25905 / DSM 1728 / JCM 9062 / NBRC 15155 / AMRC-C165).